The chain runs to 159 residues: Nucleotide-binding protein PSPTO_4393 (159 aa).

Belongs to the YajQ family.

Nucleotide-binding protein. The chain is Nucleotide-binding protein PSPTO_4393 from Pseudomonas syringae pv. tomato (strain ATCC BAA-871 / DC3000).